The following is a 198-amino-acid chain: Large ribosomal subunit protein bL25 (198 aa).

It belongs to the bacterial ribosomal protein bL25 family. CTC subfamily. In terms of assembly, part of the 50S ribosomal subunit; part of the 5S rRNA/L5/L18/L25 subcomplex. Contacts the 5S rRNA. Binds to the 5S rRNA independently of L5 and L18.

This is one of the proteins that binds to the 5S RNA in the ribosome where it forms part of the central protuberance. This chain is Large ribosomal subunit protein bL25, found in Chlorobium phaeobacteroides (strain DSM 266 / SMG 266 / 2430).